The sequence spans 142 residues: Hemoglobin subunit alpha-B (142 aa).

One can recognise a Globin domain in the interval 2–142 (PFSASDRHDI…VSETLYSKYR (141 aa)). Residue Q59 coordinates O2. H88 serves as a coordination point for heme b.

Belongs to the globin family. Heterotetramer of either two alpha-B chains or two alpha-C chains and two beta chains. The two major hemoglobins, B and C, associate upon deoxygenation to form a trimer of tetramers, BC2, that has a much lower affinity for oxygen than either component alone. In terms of tissue distribution, red blood cells.

In terms of biological role, the alpha-B chain is a component of adult hemoglobin B. This chain is Hemoglobin subunit alpha-B, found in Aquarana catesbeiana (American bullfrog).